The following is a 387-amino-acid chain: MVNSKTVVSALALSALAAAAPAPSSTTSFSINQVAVKKPAIHPAVKYAKALAKYHAEIPSNVASAAASAQSGSATNKPTADDEEYVTPITAGSSTLHLDFDTGSADLWTYSASTRGVGSHSTYDTSTGKKVSGASWQISYGDGSSASGVVYKDKVVVGGVTASSQAVEVATQVSSEFSQDTSNDGLLGLAFSSINTVSPTPQKTFYDNVKSSLAKPVFAVTLKHQAPGTYDFGFIDKSKYKGSLAYTNVDNSQGFWQFTADGYSIGGSGGGSSFSAIADTGTTLVLLDDSIVDEYYSQVQGAQNDSSQGGYVFDCSADLPDFGVQIGDYTAVIPGKYINYASTGSTCFGGIQSNSGIGFSILGDVFLKSQYVVFDGDNLQLGFAAQA.

Residues 1-19 form the signal peptide; the sequence is MVNSKTVVSALALSALAAA. Residues 20–66 constitute a propeptide, activation peptide; sequence APAPSSTTSFSINQVAVKKPAIHPAVKYAKALAKYHAEIPSNVASAA. The 300-residue stretch at 85-384 folds into the Peptidase A1 domain; that stretch reads YVTPITAGSS…DGDNLQLGFA (300 aa). Residues Asp-101 and Asp-279 contribute to the active site. Asn-304 is a glycosylation site (N-linked (GlcNAc...) asparagine). Cys-315 and Cys-347 form a disulfide bridge.

It belongs to the peptidase A1 family. Monomer.

The protein localises to the secreted. It carries out the reaction Hydrolysis of proteins with broad specificity similar to that of pepsin A, preferring hydrophobic residues at P1 and P1', but also cleaving 20-Gly-|-Glu-21 in the B chain of insulin. Clots milk, and activates trypsinogen.. Functionally, secreted aspartic endopeptidase that allows assimilation of proteinaceous substrates. The scissile peptide bond is attacked by a nucleophilic water molecule activated by two aspartic residues in the active site. Shows a broad primary substrate specificity. Favors hydrophobic residues at the P1 and P1' positions, but can also activate trypsinogen and hydrolyze the B chain of insulin between positions 'Gly-20' and 'Glu-21'. This chain is Penicillopepsin-1 (pepA), found in Talaromyces stipitatus (strain ATCC 10500 / CBS 375.48 / QM 6759 / NRRL 1006) (Penicillium stipitatum).